A 301-amino-acid chain; its full sequence is Mas-related G-protein coupled receptor member A6 (301 aa).

Residues 1–15 are Extracellular-facing; that stretch reads MHRSISIRILITNLM. Residues 16–36 form a helical membrane-spanning segment; that stretch reads IVILGLVGLTGNAIVFWLLLF. At 37-42 the chain is on the cytoplasmic side; that stretch reads RLRRNA. A helical membrane pass occupies residues 43–63; the sequence is FSIYILNLALADFLFLLCHII. Topologically, residues 64 to 77 are extracellular; it reads ASTEHILTFSSPNS. The chain crosses the membrane as a helical span at residues 78–98; the sequence is IFINCLYTFRVLLYIAGLNML. The Cytoplasmic portion of the chain corresponds to 99–128; sequence SAISIERCLSVMCPIWYRCHRPEHTSTVMC. The helical transmembrane segment at 129 to 149 threads the bilayer; that stretch reads AMIWVLSLLLCILYRYFCGFL. Residues 150–163 are Extracellular-facing; sequence DTKYEDDYGCLAMN. Residues 164 to 184 form a helical membrane-spanning segment; it reads FLTTAYLMFLFVVLCVSSLAL. Topologically, residues 185-203 are cytoplasmic; the sequence is LARLFCGAGRMKLTRLYVT. Residues 204 to 224 form a helical membrane-spanning segment; sequence ITLTLLVFLLCGLPCGFYWFL. Residues 225-240 are Extracellular-facing; that stretch reads LSKIKNVFSVFEFSLY. Residues 241-261 form a helical membrane-spanning segment; it reads LTSVVLTAINSCANPIIYFFV. Over 262-301 the chain is Cytoplasmic; it reads GSFRHRLKHQTLKMVLQSALQDTPETPENMVEMSRNKAEL.

The protein belongs to the G-protein coupled receptor 1 family. Mas subfamily. As to expression, expressed in a subset of sensory neurons that includes nociceptors. Expressed in the subclass of non-peptidergic sensory neurons that are IB4(+) and VR1(-).

The protein localises to the cell membrane. Orphan receptor. May be a receptor for RFamide-family neuropeptides such as NPFF and NPAF, which are analgesic in vivo. May regulate nociceptor function and/or development, including the sensation or modulation of pain. This is Mas-related G-protein coupled receptor member A6 (Mrgpra6) from Mus musculus (Mouse).